Here is a 588-residue protein sequence, read N- to C-terminus: L-fucose isomerase (588 aa).

Residues Glu335 and Asp359 each act as proton acceptor in the active site. Mn(2+) is bound by residues Glu335, Asp359, and His525.

Belongs to the L-fucose isomerase family. Mn(2+) is required as a cofactor.

It is found in the cytoplasm. It carries out the reaction L-fucose = L-fuculose. Its pathway is carbohydrate degradation; L-fucose degradation; L-lactaldehyde and glycerone phosphate from L-fucose: step 1/3. Functionally, converts the aldose L-fucose into the corresponding ketose L-fuculose. This is L-fucose isomerase from Streptococcus pneumoniae serotype 4 (strain ATCC BAA-334 / TIGR4).